A 304-amino-acid chain; its full sequence is Protoheme IX farnesyltransferase 2 (304 aa).

The next 9 helical transmembrane spans lie at 28-48, 50-70, 98-118, 122-142, 150-170, 176-196, 223-243, 245-265, and 282-302; these read VVAL…VVDF, WLQA…AAAF, ISVA…LYAL, LTAW…TMYL, IVIA…AVTG, AWLL…AIAI, ILLY…VGMV, SVYL…AWKL, and IYHL…GLFF.

This sequence belongs to the UbiA prenyltransferase family. Protoheme IX farnesyltransferase subfamily.

The protein resides in the cell inner membrane. It carries out the reaction heme b + (2E,6E)-farnesyl diphosphate + H2O = Fe(II)-heme o + diphosphate. The protein operates within porphyrin-containing compound metabolism; heme O biosynthesis; heme O from protoheme: step 1/1. Its function is as follows. Converts heme B (protoheme IX) to heme O by substitution of the vinyl group on carbon 2 of heme B porphyrin ring with a hydroxyethyl farnesyl side group. This is Protoheme IX farnesyltransferase 2 from Vibrio campbellii (strain ATCC BAA-1116).